A 354-amino-acid chain; its full sequence is CX3C chemokine receptor 1 (354 aa).

Residues 1 to 32 are Extracellular-facing; it reads MPTSFPELDLENFEYDDSAEACYLGDIVAFGT. A helical membrane pass occupies residues 33–60; the sequence is IFLSIFYSLVFTFGLVGNLLVVLALTNS. Residues 61 to 70 are Cytoplasmic-facing; sequence RKSKSITDIY. Residues 71–91 form a helical membrane-spanning segment; sequence LLNLALSDLLFVATLPFWTHY. Residues 92–104 are Extracellular-facing; sequence LISHEGLHNAMCK. A disulfide bridge links C103 with C176. A helical membrane pass occupies residues 105-126; that stretch reads LTTAFFFIGFFGGIFFITVISI. At 127-143 the chain is on the cytoplasmic side; the sequence is DRYLAIVLAANSMNNRT. The chain crosses the membrane as a helical span at residues 144 to 168; it reads VQHGVTISLGVWAAAILVASPQFMF. The Extracellular segment spans residues 169–196; sequence TKRKDNECLGDYPEVLQEIWPVLRNSEV. The helical transmembrane segment at 197 to 216 threads the bilayer; that stretch reads NILGFVLPLLIMSFCYFRIV. Residues 217 to 232 lie on the Cytoplasmic side of the membrane; sequence RTLFSCKNRKKARAIR. A helical membrane pass occupies residues 233–257; the sequence is LILLVVVVFFLFWTPYNIVIFLETL. Topologically, residues 258 to 274 are extracellular; sequence KFYNFFPSCGMKRDLRW. A helical transmembrane segment spans residues 275-298; that stretch reads ALSVTETVAFSHCCLNPFIYAFAG. The Cytoplasmic segment spans residues 299–354; that stretch reads EKFRRYLRHLYNKCLAVLCGRPVHAGFSTESQRSRQDSILSSLTHYTSEGEGSLLL. A Phosphothreonine modification is found at T345.

The protein belongs to the G-protein coupled receptor 1 family. As to quaternary structure, found in a ternary complex with CX3CL1 and ITGAV:ITGB3 or ITGA4:ITGB1. Post-translationally, this protein is not N-glycosylated which is unusual for G-protein-coupled receptors. As to expression, most abundant in adult spinal cord, brain, kidney, gut, uterus and testes.

It localises to the cell membrane. Receptor for the C-X3-C chemokine fractalkine (CX3CL1) present on many early leukocyte cells; CX3CR1-CX3CL1 signaling exerts distinct functions in different tissue compartments, such as immune response, inflammation, cell adhesion and chemotaxis. CX3CR1-CX3CL1 signaling mediates cell migratory functions. Responsible for the recruitment of natural killer (NK) cells to inflamed tissues. Acts as a regulator of inflammation process leading to atherogenesis by mediating macrophage and monocyte recruitment to inflamed atherosclerotic plaques, promoting cell survival. Involved in airway inflammation by promoting interleukin 2-producing T helper (Th2) cell survival in inflamed lung. Involved in the migration of circulating monocytes to non-inflamed tissues, where they differentiate into macrophages and dendritic cells. Acts as a negative regulator of angiogenesis, probably by promoting macrophage chemotaxis. Plays a key role in brain microglia by regulating inflammatory response in the central nervous system (CNS) and regulating synapse maturation. Required to restrain the microglial inflammatory response in the CNS and the resulting parenchymal damage in response to pathological stimuli. Involved in brain development by participating in synaptic pruning, a natural process during which brain microglia eliminates extra synapses during postnatal development. Synaptic pruning by microglia is required to promote the maturation of circuit connectivity during brain development. Acts as an important regulator of the gut microbiota by controlling immunity to intestinal bacteria and fungi. Expressed in lamina propria dendritic cells in the small intestine, which form transepithelial dendrites capable of taking up bacteria in order to provide defense against pathogenic bacteria. Required to initiate innate and adaptive immune responses against dissemination of commensal fungi (mycobiota) component of the gut: expressed in mononuclear phagocytes (MNPs) and acts by promoting induction of antifungal IgG antibodies response to confer protection against disseminated C.albicans or C.auris infection. Also acts as a receptor for C-C motif chemokine CCL26, inducing cell chemotaxis. In Rattus norvegicus (Rat), this protein is CX3C chemokine receptor 1.